A 96-amino-acid polypeptide reads, in one-letter code: Cathelin (96 aa).

Q1 bears the Pyrrolidone carboxylic acid mark. The segment at 31–50 (DQPPKADEDPGTPKPVSFTV) is disordered. Disulfide bonds link C55–C66 and C73–C90.

It belongs to the cathelicidin family.

Its subcellular location is the secreted. Its function is as follows. Probably a microbicidal peptide. This Sus scrofa (Pig) protein is Cathelin.